The sequence spans 725 residues: Homeobox-leucine zipper protein HDG3 (725 aa).

Residues 1 to 74 (MSQSNMVPVA…PRHKKKKYNR (74 aa)) are disordered. Over residues 11–40 (NNGDNNNDNENNNNNNNNGGTDNTNAGNDS) the composition is skewed to low complexity. Positions 46 to 64 (DSGNTSSGNHGEGLGNNQA) are enriched in polar residues. Over residues 65 to 74 (PRHKKKKYNR) the composition is skewed to basic residues. The segment at residues 68–127 (KKKKYNRHTQLQISEMEAFFRECPHPDDKQRYDLSAQLGLDPVQIKFWFQNKRTQNKNQQ) is a DNA-binding region (homeobox). A coiled-coil region spans residues 117 to 201 (QNKRTQNKNQ…SVTAEKISRL (85 aa)). One can recognise an START domain in the interval 243 to 475 (DANTKPIIME…LVRQCERISS (233 aa)).

The protein belongs to the HD-ZIP homeobox family. Class IV subfamily. As to quaternary structure, interacts with AIL7/PLT7, ANT, BBM and AIL1. As to expression, expressed in siliques.

It is found in the nucleus. Probable transcription factor. Seems to promote cell differentiation. This is Homeobox-leucine zipper protein HDG3 from Arabidopsis thaliana (Mouse-ear cress).